Here is a 382-residue protein sequence, read N- to C-terminus: N-acetylglucosamine-6-phosphate deacetylase (382 aa).

An a divalent metal cation-binding site is contributed by Glu131. 142-143 (TH) is a binding site for substrate. Residues His195 and His216 each coordinate a divalent metal cation. Substrate is bound by residues 219 to 220 (NA), Arg227, and 248 to 251 (DGLH). Asp273 acts as the Proton donor/acceptor in catalysis. 306–308 (LSG) provides a ligand contact to substrate.

The protein belongs to the metallo-dependent hydrolases superfamily. NagA family. As to quaternary structure, homotetramer. It depends on a divalent metal cation as a cofactor.

It catalyses the reaction N-acetyl-D-glucosamine 6-phosphate + H2O = D-glucosamine 6-phosphate + acetate. Its pathway is amino-sugar metabolism; N-acetylneuraminate degradation; D-fructose 6-phosphate from N-acetylneuraminate: step 4/5. Involved in the first committed step in the biosynthesis of amino-sugar-nucleotides. Catalyzes the hydrolysis of the N-acetyl group of N-acetylglucosamine-6-phosphate (GlcNAc-6-P) to yield glucosamine 6-phosphate and acetate. Can probably also catalyze the deacetylation of N-acetyl-D-galactosamine 6-phosphate to D-galactosamine 6-phosphate. This Escherichia coli O157:H7 protein is N-acetylglucosamine-6-phosphate deacetylase (nagA).